Here is a 226-residue protein sequence, read N- to C-terminus: Enolase-phosphatase E1 (226 aa).

It belongs to the HAD-like hydrolase superfamily. MasA/MtnC family. Monomer. Mg(2+) serves as cofactor.

It carries out the reaction 5-methylsulfanyl-2,3-dioxopentyl phosphate + H2O = 1,2-dihydroxy-5-(methylsulfanyl)pent-1-en-3-one + phosphate. It functions in the pathway amino-acid biosynthesis; L-methionine biosynthesis via salvage pathway; L-methionine from S-methyl-5-thio-alpha-D-ribose 1-phosphate: step 3/6. The protein operates within amino-acid biosynthesis; L-methionine biosynthesis via salvage pathway; L-methionine from S-methyl-5-thio-alpha-D-ribose 1-phosphate: step 4/6. Bifunctional enzyme that catalyzes the enolization of 2,3-diketo-5-methylthiopentyl-1-phosphate (DK-MTP-1-P) into the intermediate 2-hydroxy-3-keto-5-methylthiopentenyl-1-phosphate (HK-MTPenyl-1-P), which is then dephosphorylated to form the acireductone 1,2-dihydroxy-3-keto-5-methylthiopentene (DHK-MTPene). The polypeptide is Enolase-phosphatase E1 (Shewanella baltica (strain OS223)).